Consider the following 873-residue polypeptide: Serine/threonine-protein phosphatase 4 regulatory subunit 4 (873 aa).

HEAT repeat units lie at residues 213–251, 252–290, and 392–427; these read ILPLVKSLCQDVEYEVRSCMCRQLENIAQGIGTELTKSV, VLPELIELSRDEGSSVRLAAFETLVNLLDIFDTDDRSQT, and NFHMELYSTFFCLCHDPEVPVRYTIAICFYEVSKLL. Positions 686 to 720 form a coiled coil; sequence QKKFYEKDLLDQEKEREELLLLEMEQLEKEKQQND. Residues 713–737 are compositionally biased toward basic and acidic residues; it reads EKEKQQNDGRPMSDKMFEKKRRDTK. The interval 713–766 is disordered; sequence EKEKQQNDGRPMSDKMFEKKRRDTKTPTQSLPKNIPISVPGPSSVTPSTSKEIK. Residues 747–762 show a composition bias toward low complexity; it reads IPISVPGPSSVTPSTS. A Phosphoserine modification is found at Ser-775. The residue at position 797 (Thr-797) is a Phosphothreonine. Over residues 822 to 858 the composition is skewed to polar residues; sequence TRNASSVPSSFSPNTPLPSTSRGTGNSVDPKSSGSKD. The disordered stretch occupies residues 822–873; the sequence is TRNASSVPSSFSPNTPLPSTSRGTGNSVDPKSSGSKDTQPRKATLKSRKSNP. Positions 864 to 873 are enriched in basic residues; the sequence is ATLKSRKSNP.

In terms of assembly, serine/threonine-protein phosphatase 4 (PP4) occurs in different assemblies of the catalytic and one or more regulatory subunits. Component of the PP4 complex PPP4C-PPP4R4.

Its subcellular location is the cytoplasm. In terms of biological role, putative regulatory subunit of serine/threonine-protein phosphatase 4. In Homo sapiens (Human), this protein is Serine/threonine-protein phosphatase 4 regulatory subunit 4 (PPP4R4).